The primary structure comprises 205 residues: Large ribosomal subunit protein uL3 (205 aa).

The protein belongs to the universal ribosomal protein uL3 family. In terms of assembly, part of the 50S ribosomal subunit. Forms a cluster with proteins L14 and L19.

Functionally, one of the primary rRNA binding proteins, it binds directly near the 3'-end of the 23S rRNA, where it nucleates assembly of the 50S subunit. The polypeptide is Large ribosomal subunit protein uL3 (Parabacteroides distasonis (strain ATCC 8503 / DSM 20701 / CIP 104284 / JCM 5825 / NCTC 11152)).